Here is a 355-residue protein sequence, read N- to C-terminus: Guanine nucleotide-binding protein G(q) subunit alpha (355 aa).

A lipid anchor (S-palmitoyl cysteine) is attached at C3. The 324-residue stretch at 32 to 355 (KEIKLLLLGT…QHITEVVPGL (324 aa)) folds into the G-alpha domain. Residues 35–48 (KLLLLGTGESGKST) form a G1 motif region. Residues 40–47 (GTGESGKS), 174–180 (LRVRVPT), 199–203 (DVGGQ), 269–272 (NKKD), and A326 each bind GTP. Residues S47 and T180 each coordinate Mg(2+). Residues 172–180 (DVLRVRVPT) form a G2 motif region. The G3 motif stretch occupies residues 195–204 (FKMVDVGGQR). The tract at residues 265–272 (ILFLNKKD) is G4 motif. Residues 324–329 (TCATDT) are G5 motif.

It belongs to the G-alpha family. G(q) subfamily. G proteins are composed of 3 units; alpha, beta and gamma. The alpha chain contains the guanine nucleotide binding site.

Its function is as follows. Guanine nucleotide-binding proteins (G proteins) are involved as modulators or transducers in various transmembrane signaling systems. In Geodia cydonium (Sponge), this protein is Guanine nucleotide-binding protein G(q) subunit alpha.